The following is a 337-amino-acid chain: MMDKHKYRVEIQQMMFVSGEINDPPVETTSLIEDIVRGQVIEILLQSNKTAHLRGSRSILPEDVIFLIRHDKAKVNRLRTYLSWKDLRKNAKDQDASAGVASGTGNPGAGGEDDLKKAGGGEKDEKDGGNMMKVKKSQIKLPWELQFMFNEHPLENNDDNDDMDEDEREANIVTLKRLKMADDRTRNMTKEEYVHWSDCRQASFTFRKNKRFKDWSGISQLTEGKPHDDVIDILGFLTFEIVCSLTETALKIKQREQVLQTQKDKSQQSSQDNTNFEFASSTLHRKKRLFDGPENVINPLKPRHIEEAWRVLQTIDMRHRALTNFKGGRLSSKPIIM.

The interval lysine 92–methionine 131 is disordered. Positions aspartate 113 to glycine 128 are enriched in basic and acidic residues. Serine 270 carries the phosphoserine modification.

Belongs to the SPT3 family. In terms of assembly, component of the 1.8 MDa SAGA (Spt-Ada-Gcn5 acetyltransferase) complex, which is composed of 19 subunits TRA1, SPT7, TAF5, NGG1/ADA3, SGF73, SPT20/ADA5, SPT8, TAF12, TAF6, HFI1/ADA1, UBP8, GCN5, ADA2, SPT3, SGF29, TAF10, TAF9, SGF11 and SUS1. The SAGA complex is composed of 4 modules, namely the HAT (histone acetyltransferase) module (GCN5, ADA2, NGG1/ADA3 and SGF29), the DUB (deubiquitinating) module (UBP8, SGF11, SGF73 and SUS1), the core or TAF (TBP-associated factor) module (TAF5, TAF6, TAF9, TAF10 and TAF12), and the Tra1 or SPT (Suppressor of Ty) module (TRA1, HFI1/ADA1, SPT3, SPT7, SPT8 and SPT20/ADA5). The Tra1/SPT module binds activators, the core module recruits TBP (TATA-binding protein), the HAT module contains the histone H3 acetyltransferase GCN5, and the DUB module comprises the histone H2B deubiquitinase UBP8. Also identified in an altered form of SAGA, named SALSA (SAGA altered, Spt8 absent) or SLIK (SAGA-like) complex, which contains a C-terminal truncated form of SPT7 and is missing SPT8. However, it has been shown that the SAGA and SAGA-like SALSA/SLIK transcriptional coactivators are structurally and biochemically equivalent.

It is found in the nucleus. Its subcellular location is the cytoplasm. Functionally, component of the transcription coactivator SAGA complex. SAGA acts as a general cofactor required for essentially all RNA polymerase II transcription. At the promoters, SAGA is required for transcription pre-initiation complex (PIC) recruitment. It influences RNA polymerase II transcriptional activity through different activities such as TBP interaction (via core/TAF module) and promoter selectivity, interaction with transcription activators (via Tra1/SPT module), and chromatin modification through histone acetylation (via HAT module) and deubiquitination (via DUB module). SAGA preferentially acetylates histones H3 (to form H3K9ac, H3K14ac, H3K18ac and H3K23ac) and H2B and deubiquitinates histone H2B. SAGA interacts with DNA via upstream activating sequences (UASs). Also identified in a modified version of SAGA named SALSA or SLIK. The cleavage of SPT7 and the absence of the SPT8 subunit in SLIK neither drive any major conformational differences in its structure compared with SAGA, nor significantly affect HAT, DUB, or DNA-binding activities. SPT3 is required for recruitment of TATA-binding protein (TBP) to SAGA-dependent promoters. During SAGA-mediated transcriptional inhibition, SPT3 and SPT8 prevent binding of TBP to the TATA box. Required for diploid filamentous growth and haploid invasive growth. In Saccharomyces cerevisiae (strain ATCC 204508 / S288c) (Baker's yeast), this protein is SAGA complex subunit SPT3 (SPT3).